The primary structure comprises 1105 residues: ATP-dependent DNA helicase MPH1 (1105 aa).

The 168-residue stretch at 94-261 (IVQRAFYDNL…EIIDNLSISK (168 aa)) folds into the Helicase ATP-binding domain. 107-114 (LPTGLGKT) serves as a coordination point for ATP. Residues 209–212 (DEAH) carry the DEAH box motif. A Helicase C-terminal domain is found at 468-641 (SIERIGSNLR…LITLAQSNRI (174 aa)). Disordered regions lie at residues 493-534 (EEAY…AQIK), 684-708 (KGKKVTKSKSKSKSNSKSKKIEKRF), 758-824 (IQSK…PKLG), 850-880 (LVTGKSTSPPENVAEKRNSPILNSSNRECAP), and 918-953 (VSDDEKSVEDSINNQQLHKNKNLGSTSDDDDAFDEG). The span at 499-511 (KGKKGRTKGKATK) shows a compositional bias: basic residues. A compositionally biased stretch (basic and acidic residues) spans 518-532 (TPERSTSRTSSEDAQ). Residues 684–705 (KGKKVTKSKSKSKSNSKSKKIE) are compositionally biased toward basic residues. The segment covering 764–787 (PVKENQSKRPNSEHICEEDSRQET) has biased composition (basic and acidic residues). Residues 788 to 799 (ENNSNESNGSFE) are compositionally biased toward low complexity. A compositionally biased stretch (polar residues) spans 927–943 (DSINNQQLHKNKNLGST). The span at 944–953 (SDDDDAFDEG) shows a compositional bias: acidic residues.

Belongs to the DEAD box helicase family. DEAH subfamily. FANCM sub-subfamily. In terms of assembly, interacts with the MHF histone-fold complex to form the FANCM-MHF complex.

It localises to the nucleus. The catalysed reaction is ATP + H2O = ADP + phosphate + H(+). In terms of biological role, ATP-dependent DNA helicase involved in DNA damage repair by homologous recombination and in genome maintenance. Capable of unwinding D-loops. Plays a role in limiting crossover recombinants during mitotic DNA double-strand break (DSB) repair. Component of a FANCM-MHF complex which promotes gene conversion at blocked replication forks, probably by reversal of the stalled fork. The chain is ATP-dependent DNA helicase MPH1 from Debaryomyces hansenii (strain ATCC 36239 / CBS 767 / BCRC 21394 / JCM 1990 / NBRC 0083 / IGC 2968) (Yeast).